We begin with the raw amino-acid sequence, 208 residues long: Outer-membrane lipoprotein carrier protein (208 aa).

An N-terminal signal peptide occupies residues 1–22 (MKNLLCAVMLTSPLLYSTAVFA).

The protein belongs to the LolA family. Monomer.

The protein localises to the periplasm. Functionally, participates in the translocation of lipoproteins from the inner membrane to the outer membrane. Only forms a complex with a lipoprotein if the residue after the N-terminal Cys is not an aspartate (The Asp acts as a targeting signal to indicate that the lipoprotein should stay in the inner membrane). This chain is Outer-membrane lipoprotein carrier protein, found in Shewanella sp. (strain W3-18-1).